The sequence spans 209 residues: Large ribosomal subunit protein bL25 (209 aa).

Residues 185-209 (SKATTGEEEGAEAAGEGEEAEEKPE) are disordered. Over residues 190 to 209 (GEEEGAEAAGEGEEAEEKPE) the composition is skewed to acidic residues.

Belongs to the bacterial ribosomal protein bL25 family. CTC subfamily. As to quaternary structure, part of the 50S ribosomal subunit; part of the 5S rRNA/L5/L18/L25 subcomplex. Contacts the 5S rRNA. Binds to the 5S rRNA independently of L5 and L18.

This is one of the proteins that binds to the 5S RNA in the ribosome where it forms part of the central protuberance. The chain is Large ribosomal subunit protein bL25 from Syntrophomonas wolfei subsp. wolfei (strain DSM 2245B / Goettingen).